A 57-amino-acid chain; its full sequence is Large ribosomal subunit protein bL32c (57 aa).

The protein belongs to the bacterial ribosomal protein bL32 family.

The protein localises to the plastid. It localises to the chloroplast. This Phalaenopsis aphrodite subsp. formosana (Moth orchid) protein is Large ribosomal subunit protein bL32c.